A 461-amino-acid polypeptide reads, in one-letter code: RNA-binding protein ZCH321 (461 aa).

2 C3H1-type zinc fingers span residues 63–85 (LCQLFLNGRCRQGTQCHQVHAAL) and 181–208 (ACDFKICGLHTLDRCRYAEECIFLHICK). The disordered stretch occupies residues 224–243 (TSQARDGGEPGPRGAKKGSV). An MKT1-binding motif motif is present at residues 446–451 (WQHNPY).

Functionally, RNA-binding protein involved in regulation of mRNA stability. Promotes mRNA stabilization by recruiting MKT1 and PBP1. Stabilizes transcripts encoding mitochondrial proteins. The chain is RNA-binding protein ZCH321 from Trypanosoma brucei brucei (strain 927/4 GUTat10.1).